The primary structure comprises 213 residues: 3-isopropylmalate dehydratase small subunit (213 aa).

It belongs to the LeuD family. LeuD type 1 subfamily. Heterodimer of LeuC and LeuD.

The catalysed reaction is (2R,3S)-3-isopropylmalate = (2S)-2-isopropylmalate. The protein operates within amino-acid biosynthesis; L-leucine biosynthesis; L-leucine from 3-methyl-2-oxobutanoate: step 2/4. Catalyzes the isomerization between 2-isopropylmalate and 3-isopropylmalate, via the formation of 2-isopropylmaleate. The chain is 3-isopropylmalate dehydratase small subunit from Neisseria meningitidis serogroup C / serotype 2a (strain ATCC 700532 / DSM 15464 / FAM18).